Here is a 168-residue protein sequence, read N- to C-terminus: Pollen allergen Cro s 1 (168 aa).

The signal sequence occupies residues 1 to 26 (MGKCQAVFLLVGALCVLSLAGVANAA). Disulfide bonds link Cys-38–Cys-109, Cys-41–Cys-153, and Cys-62–Cys-97. The N-linked (GlcNAc...) asparagine glycan is linked to Asn-64.

This sequence belongs to the Ole e I family. In terms of tissue distribution, expressed in pollen.

Its subcellular location is the secreted. In Crocus sativus (Saffron), this protein is Pollen allergen Cro s 1.